The chain runs to 39 residues: Cytochrome b559 subunit beta (39 aa).

Residues 14 to 30 (WLAVHGLAVPTVFFLGS) traverse the membrane as a helical segment. Heme is bound at residue histidine 18.

This sequence belongs to the PsbE/PsbF family. Heterodimer of an alpha subunit and a beta subunit. PSII is composed of 1 copy each of membrane proteins PsbA, PsbB, PsbC, PsbD, PsbE, PsbF, PsbH, PsbI, PsbJ, PsbK, PsbL, PsbM, PsbT, PsbX, PsbY, PsbZ, Psb30/Ycf12, at least 3 peripheral proteins of the oxygen-evolving complex and a large number of cofactors. It forms dimeric complexes. Heme b is required as a cofactor.

The protein resides in the plastid. It is found in the chloroplast thylakoid membrane. This b-type cytochrome is tightly associated with the reaction center of photosystem II (PSII). PSII is a light-driven water:plastoquinone oxidoreductase that uses light energy to abstract electrons from H(2)O, generating O(2) and a proton gradient subsequently used for ATP formation. It consists of a core antenna complex that captures photons, and an electron transfer chain that converts photonic excitation into a charge separation. The sequence is that of Cytochrome b559 subunit beta from Adiantum capillus-veneris (Maidenhair fern).